Here is an 89-residue protein sequence, read N- to C-terminus: Protein PerC (89 aa).

In terms of biological role, transcriptional activator of eaeA/bfpA expression in enteropathogenic E.coli. This is Protein PerC (perC) from Escherichia coli O111:H-.